The sequence spans 231 residues: uncharacterized protein (231 aa).

Belongs to the DnaA family. HdA subfamily.

This is an uncharacterized protein from Haemophilus influenzae (strain ATCC 51907 / DSM 11121 / KW20 / Rd).